A 538-amino-acid chain; its full sequence is Phosphoenolpyruvate carboxykinase (ATP) (538 aa).

Residues arginine 64, tyrosine 205, and lysine 211 each coordinate substrate. Residues lysine 211, histidine 230, and 246–254 (GLSGTGKTT) contribute to the ATP site. Mn(2+)-binding residues include lysine 211 and histidine 230. Aspartate 267 contributes to the Mn(2+) binding site. ATP contacts are provided by residues glutamate 295, arginine 331, 447-448 (RI), and threonine 453. Arginine 331 lines the substrate pocket.

This sequence belongs to the phosphoenolpyruvate carboxykinase (ATP) family. Monomer. Mn(2+) serves as cofactor.

Its subcellular location is the cytoplasm. The catalysed reaction is oxaloacetate + ATP = phosphoenolpyruvate + ADP + CO2. The protein operates within carbohydrate biosynthesis; gluconeogenesis. Involved in the gluconeogenesis. Catalyzes the conversion of oxaloacetate (OAA) to phosphoenolpyruvate (PEP) through direct phosphoryl transfer between the nucleoside triphosphate and OAA. The sequence is that of Phosphoenolpyruvate carboxykinase (ATP) from Mannheimia succiniciproducens (strain KCTC 0769BP / MBEL55E).